We begin with the raw amino-acid sequence, 1005 residues long: Helicase-like transcription factor (1005 aa).

Arg-27 carries the omega-N-methylarginine modification. A DNA-binding region spans residues 38 to 287 (EFQDIIPPDD…FSEKDQPENV (250 aa)). A Glycyl lysine isopeptide (Lys-Gly) (interchain with G-Cter in SUMO2) cross-link involves residue Lys-112. Position 195 is a phosphotyrosine; by JAK2 (Tyr-195). A Glycyl lysine isopeptide (Lys-Gly) (interchain with G-Cter in SUMO2) cross-link involves residue Lys-211. 294–301 (DDMGLGKT) serves as a coordination point for ATP. Residues 325 to 361 (KNQVKKECNSSESDKPGRKDTIKKTDGLSKEGSRYSE) are compositionally biased toward basic and acidic residues. The segment at 325–385 (KNQVKKECNS…SELSSSQPKR (61 aa)) is disordered. The segment covering 373–382 (YSMSELSSSQ) has biased composition (polar residues). Residues Ser-395, Ser-396, and Ser-398 each carry the phosphoserine modification. The Helicase ATP-binding domain maps to 427 to 603 (GPSKIKEDTA…WSLLSFLKLK (177 aa)). The DEGH box motif lies at 554–557 (DEGH). Thr-733 bears the Phosphothreonine mark. An RING-type zinc finger spans residues 757–798 (CAICLDSLTVPVITHCAHVFCKPCICQCIQNEQPHAKCPLCR). Required for interaction with the RFBP isoform of ATP11B stretches follow at residues 767–772 (PVITHC) and 791–796 (HAKCPL). The region spanning 834–999 (ALMHALIDLR…EMKQAKINEI (166 aa)) is the Helicase C-terminal domain. The tract at residues 922–1005 (SRVFLMDPAW…INEIRTLIDL (84 aa)) is interaction with SP1 and SP3.

The protein belongs to the SNF2/RAD54 helicase family. RAD16 subfamily. As to quaternary structure, interacts with SP1 and SP3 independently of DNA; the interaction with these transcriptional factors may be required for basal transcription of target genes. Interacts (via the RING-finger) with isoform RFBP of ATP11B. Progesterone-dependent isoform 1 interacts with EGR1; the interaction requires prior binding to DNA and represses c-Rel via a DNA looping mechanism. Interacts with GATA4. Interacts with PCNA; the interaction promotes polyubiquitination of PCNA through association with the UBE2B-RAD18 and UBE2V2-UBE2N ubiquitin ligase complexes. Interacts with RAD18, SHPRH, UBE2V2 and UBE2N. Phosphorylated on serine, threonine, and tyrosine residues. Tyr-195 phosphorylation is catalyzed by JAK2 in response to prolactin treatment. It is required for DNA binding. In terms of tissue distribution, isoform 1 is expressed preferentially in bladder, cervix, diaphragm, duodenum, epididymis, heart, kidney, liver, lung, ovary (granulosa cells), prostate, spleen, testis (predominantly in the Sertoli cells of the seminiferous tubules) and vagina. Isoform 2 is expressed preferentially in lactating mammary gland and uterine endometrium.

It is found in the cytoplasm. Its subcellular location is the nucleus. It localises to the nucleolus. The protein localises to the nucleoplasm. The enzyme catalyses S-ubiquitinyl-[E2 ubiquitin-conjugating enzyme]-L-cysteine + [acceptor protein]-L-lysine = [E2 ubiquitin-conjugating enzyme]-L-cysteine + N(6)-ubiquitinyl-[acceptor protein]-L-lysine.. It participates in protein modification; protein ubiquitination. Its function is as follows. Has both helicase and E3 ubiquitin ligase activities. Possesses intrinsic ATP-dependent nucleosome-remodeling activity. This activity may be required for transcriptional activation or repression of specific target promoters. These may include the SERPINE1, to which this protein can bind directly. Mediates repression by c-Rel through a DNA-looping mechanism. Plays a role in error-free postreplication repair (PRR) of damaged DNA and maintains genomic stability through acting as a ubiquitin ligase for 'Lys-63'-linked polyubiquitination of chromatin-bound PCNA. Transcriptional regulator that mediates the ability of prolactin to augment progesterone-dependent transcription of the SCGB1A1/uteroglobin gene through a bipartite progesterone receptor half-site/overlapping Y-box combination (-38/-26) where progesterone activation is attenuated by nuclear factor Y binding. Regulation also involves two GC-rich sequences in the proximal promoter (positions -162/+90) and a RUSH/SMARCA3 site (positions -616/-611) in the 5'-untranslated region. This Oryctolagus cuniculus (Rabbit) protein is Helicase-like transcription factor (HLTF).